Reading from the N-terminus, the 63-residue chain is Crotasin (63 aa).

Residues 1–22 (MKILYLLSAFLFLAFLSESGNA) form the signal peptide. Disulfide bonds link cysteine 26-cysteine 56, cysteine 33-cysteine 50, and cysteine 38-cysteine 57.

Highly expressed in pancreas, heart, liver, brain and kidney. Expressed to a low extent in the venom gland.

It localises to the secreted. The sequence is that of Crotasin from Crotalus durissus terrificus (South American rattlesnake).